Here is a 166-residue protein sequence, read N- to C-terminus: 2-C-methyl-D-erythritol 2,4-cyclodiphosphate synthase (166 aa).

Positions 12 and 14 each coordinate a divalent metal cation. 4-CDP-2-C-methyl-D-erythritol 2-phosphate is bound by residues 12 to 14 (DSH) and 38 to 39 (HS). His-46 lines the a divalent metal cation pocket. Residues 60-62 (DIG), 65-69 (FPDTD), and Arg-146 contribute to the 4-CDP-2-C-methyl-D-erythritol 2-phosphate site.

The protein belongs to the IspF family. In terms of assembly, homotrimer. A divalent metal cation serves as cofactor.

The enzyme catalyses 4-CDP-2-C-methyl-D-erythritol 2-phosphate = 2-C-methyl-D-erythritol 2,4-cyclic diphosphate + CMP. It functions in the pathway isoprenoid biosynthesis; isopentenyl diphosphate biosynthesis via DXP pathway; isopentenyl diphosphate from 1-deoxy-D-xylulose 5-phosphate: step 4/6. Involved in the biosynthesis of isopentenyl diphosphate (IPP) and dimethylallyl diphosphate (DMAPP), two major building blocks of isoprenoid compounds. Catalyzes the conversion of 4-diphosphocytidyl-2-C-methyl-D-erythritol 2-phosphate (CDP-ME2P) to 2-C-methyl-D-erythritol 2,4-cyclodiphosphate (ME-CPP) with a corresponding release of cytidine 5-monophosphate (CMP). The polypeptide is 2-C-methyl-D-erythritol 2,4-cyclodiphosphate synthase (Gemmatimonas aurantiaca (strain DSM 14586 / JCM 11422 / NBRC 100505 / T-27)).